We begin with the raw amino-acid sequence, 504 residues long: Histidine ammonia-lyase (504 aa).

The segment at residues 141–143 is a cross-link (5-imidazolinone (Ala-Gly)); sequence ASG. 2,3-didehydroalanine (Ser) is present on serine 142.

The protein belongs to the PAL/histidase family. Post-translationally, contains an active site 4-methylidene-imidazol-5-one (MIO), which is formed autocatalytically by cyclization and dehydration of residues Ala-Ser-Gly.

The protein resides in the cytoplasm. It catalyses the reaction L-histidine = trans-urocanate + NH4(+). It functions in the pathway amino-acid degradation; L-histidine degradation into L-glutamate; N-formimidoyl-L-glutamate from L-histidine: step 1/3. The chain is Histidine ammonia-lyase from Geobacillus thermodenitrificans (strain NG80-2).